Reading from the N-terminus, the 495-residue chain is Probable cytochrome P450 4s3 (495 aa).

Heme is bound by residues Glu-307 and Cys-436.

Belongs to the cytochrome P450 family. Heme is required as a cofactor.

The protein localises to the endoplasmic reticulum membrane. It is found in the microsome membrane. Its function is as follows. May be involved in the metabolism of insect hormones and in the breakdown of synthetic insecticides. This is Probable cytochrome P450 4s3 (Cyp4s3) from Drosophila melanogaster (Fruit fly).